The following is a 240-amino-acid chain: Uridylate kinase (240 aa).

12 to 15 (KLSG) is an ATP binding site. Gly-54 is a UMP binding site. ATP contacts are provided by Gly-55 and Arg-59. UMP is bound by residues Asp-74 and 135–142 (TGNPFFTT). Residues Thr-162, Tyr-168, and Asp-171 each coordinate ATP.

Belongs to the UMP kinase family. In terms of assembly, homohexamer.

The protein localises to the cytoplasm. It catalyses the reaction UMP + ATP = UDP + ADP. The protein operates within pyrimidine metabolism; CTP biosynthesis via de novo pathway; UDP from UMP (UMPK route): step 1/1. Its activity is regulated as follows. Inhibited by UTP. Its function is as follows. Catalyzes the reversible phosphorylation of UMP to UDP. This is Uridylate kinase from Xanthomonas euvesicatoria pv. vesicatoria (strain 85-10) (Xanthomonas campestris pv. vesicatoria).